Consider the following 512-residue polypeptide: Probable cytosol aminopeptidase (512 aa).

Residues Lys-284 and Asp-289 each coordinate Mn(2+). Lys-296 is an active-site residue. Mn(2+)-binding residues include Asp-307, Asp-366, and Glu-368. Residue Arg-370 is part of the active site.

This sequence belongs to the peptidase M17 family. The cofactor is Mn(2+).

It is found in the cytoplasm. It catalyses the reaction Release of an N-terminal amino acid, Xaa-|-Yaa-, in which Xaa is preferably Leu, but may be other amino acids including Pro although not Arg or Lys, and Yaa may be Pro. Amino acid amides and methyl esters are also readily hydrolyzed, but rates on arylamides are exceedingly low.. It carries out the reaction Release of an N-terminal amino acid, preferentially leucine, but not glutamic or aspartic acids.. Its function is as follows. Presumably involved in the processing and regular turnover of intracellular proteins. Catalyzes the removal of unsubstituted N-terminal amino acids from various peptides. This chain is Probable cytosol aminopeptidase, found in Cupriavidus necator (strain ATCC 17699 / DSM 428 / KCTC 22496 / NCIMB 10442 / H16 / Stanier 337) (Ralstonia eutropha).